The primary structure comprises 106 residues: Large ribosomal subunit protein uL24 (106 aa).

Belongs to the universal ribosomal protein uL24 family. Part of the 50S ribosomal subunit.

Its function is as follows. One of two assembly initiator proteins, it binds directly to the 5'-end of the 23S rRNA, where it nucleates assembly of the 50S subunit. One of the proteins that surrounds the polypeptide exit tunnel on the outside of the subunit. This is Large ribosomal subunit protein uL24 from Orientia tsutsugamushi (strain Boryong) (Rickettsia tsutsugamushi).